The following is a 165-amino-acid chain: MADNNKKPAGLTEKKANRRGAARLAAVQALYQMDIAGAGINDIFAEFESHWLGNEVEGDTYLPAEAAFFRDVVSGVVRDQKKLDPLIDEALSKGWPLKRIEAILRAVLRAGAYELQHRKDVPGRVVVSEYVDVANAFVDREETGMVNAVLDQIGRQFRGDEFGRG.

Belongs to the NusB family.

Its function is as follows. Involved in transcription antitermination. Required for transcription of ribosomal RNA (rRNA) genes. Binds specifically to the boxA antiterminator sequence of the ribosomal RNA (rrn) operons. The chain is Transcription antitermination protein NusB from Bradyrhizobium diazoefficiens (strain JCM 10833 / BCRC 13528 / IAM 13628 / NBRC 14792 / USDA 110).